Consider the following 515-residue polypeptide: Tripartite motif-containing protein 5 (515 aa).

Alanine 2 is subject to N-acetylalanine. The RING-type zinc finger occupies 15 to 60 (CPICLELLTEPLSLPCGHSFCQACITANHKESMLYKEEERSCPVCR). Residue serine 87 is modified to Phosphoserine. The segment at 92 to 133 (QKVDHCARHGEKLLLFCQEDSKVICWLCERSQEHRGHHTFLM) adopts a B box-type zinc-finger fold. 4 residues coordinate Zn(2+): cysteine 97, histidine 100, cysteine 119, and histidine 125. A coiled-coil region spans residues 137-225 (AQEYHVKLQT…LTKSETEMVQ (89 aa)). The tract at residues 187–200 (FEQLREILDWEESN) is required for interaction with GABARAP and for autophagy. In terms of domain architecture, B30.2/SPRY spans 283–515 (LKGMLDMFRE…VPMTLCSPSS (233 aa)).

This sequence belongs to the TRIM/RBCC family. Can form homodimers and homotrimers. In addition to lower-order dimerization, also exhibits a higher-order multimerization and both low- and high-order multimerizations are essential for its restriction activity. Interacts with BTBD1 and BTBD2. Interacts with PSMC4, PSMC5, PSMD7 and HSPA8/HSC70. Interacts (via B30.2/SPRY domain) with HSPA1A/B. Interacts with PSMC2, MAP3K7/TAK1, TAB2 and TAB3. Interacts with SQSTM1. Interacts with TRIM6 and TRIM34. Interacts with ULK1 (phosphorylated form), GABARAP, GABARAPL1, GABARAPL2, MAP1LC3A, MAP1LC3C and BECN1. Post-translationally, degraded in a proteasome-independent fashion in the absence of viral infection but in a proteasome-dependent fashion following exposure to restriction sensitive virus. Autoubiquitinated in a RING finger- and UBE2D2-dependent manner. Monoubiquitinated by TRIM21. Deubiquitinated by Yersinia YopJ. Ubiquitination may not lead to proteasomal degradation.

The protein localises to the cytoplasm. The protein resides in the nucleus. It catalyses the reaction S-ubiquitinyl-[E2 ubiquitin-conjugating enzyme]-L-cysteine + [acceptor protein]-L-lysine = [E2 ubiquitin-conjugating enzyme]-L-cysteine + N(6)-ubiquitinyl-[acceptor protein]-L-lysine.. The protein operates within protein modification; protein ubiquitination. Its function is as follows. Capsid-specific restriction factor that prevents infection from non-host-adapted retroviruses. Blocks viral replication early in the life cycle, after viral entry but before reverse transcription. In addition to acting as a capsid-specific restriction factor, also acts as a pattern recognition receptor that activates innate immune signaling in response to the retroviral capsid lattice. Binding to the viral capsid triggers its E3 ubiquitin ligase activity, and in concert with the heterodimeric ubiquitin conjugating enzyme complex UBE2V1-UBE2N (also known as UBC13-UEV1A complex) generates 'Lys-63'-linked polyubiquitin chains, which in turn are catalysts in the autophosphorylation of the MAP3K7/TAK1 complex (includes TAK1, TAB2, and TAB3). Activation of the MAP3K7/TAK1 complex by autophosphorylation results in the induction and expression of NF-kappa-B and MAPK-responsive inflammatory genes, thereby leading to an innate immune response in the infected cell. Restricts infection by human immunodeficiency virus type 1 (HIV-1), simian immunodeficiency virus (SIV-mac) and N-tropic murine leukemia viruse (N-MLV). Plays a role in regulating autophagy through activation of autophagy regulator BECN1 by causing its dissociation from its inhibitors BCL2 and TAB2. The polypeptide is Tripartite motif-containing protein 5 (TRIM5) (Chlorocebus tantalus (Tantalus monkey)).